The primary structure comprises 250 residues: Triosephosphate isomerase (250 aa).

9-11 (NWK) is a substrate binding site. Catalysis depends on His96, which acts as the Electrophile. The active-site Proton acceptor is the Glu166. Substrate is bound by residues Gly172, Ser212, and 233 to 234 (GG).

This sequence belongs to the triosephosphate isomerase family. As to quaternary structure, homodimer.

Its subcellular location is the cytoplasm. It catalyses the reaction D-glyceraldehyde 3-phosphate = dihydroxyacetone phosphate. It functions in the pathway carbohydrate biosynthesis; gluconeogenesis. The protein operates within carbohydrate degradation; glycolysis; D-glyceraldehyde 3-phosphate from glycerone phosphate: step 1/1. Involved in the gluconeogenesis. Catalyzes stereospecifically the conversion of dihydroxyacetone phosphate (DHAP) to D-glyceraldehyde-3-phosphate (G3P). This Chlorobium phaeovibrioides (strain DSM 265 / 1930) (Prosthecochloris vibrioformis (strain DSM 265)) protein is Triosephosphate isomerase.